A 623-amino-acid chain; its full sequence is Lethal(3)malignant brain tumor-like protein 4 (623 aa).

A disordered region spans residues 1–44 (MKQPNRKRKLNMDSKERLDQDGRLEQAEEEKKPKDSTTPLSHVP). Positions 10–35 (LNMDSKERLDQDGRLEQAEEEKKPKD) are enriched in basic and acidic residues. 3 MBT repeats span residues 52 to 152 (WSWE…LHIP), 160 to 260 (FVWM…LIAP), and 269 to 364 (FSWT…LEVP). The CCHHC-type zinc-finger motif lies at 370-414 (LKILPGQAVCPTPGCRGIGHIRGPRYSGHHSAFGCPYSDMNLKKE). Zn(2+)-binding residues include Cys379, Cys384, His398, and Cys404. Residues 543–607 (WTVDEVAEFV…YNSILMFRHS (65 aa)) enclose the SAM domain.

Its subcellular location is the nucleus. In terms of biological role, putative Polycomb group (PcG) protein. PcG proteins maintain the transcriptionally repressive state of genes, probably via a modification of chromatin, rendering it heritably changed in its expressibility. This is Lethal(3)malignant brain tumor-like protein 4 (L3MBTL4) from Homo sapiens (Human).